The chain runs to 223 residues: Ras-related protein Rab-21 (223 aa).

At A2 the chain carries N-acetylalanine. GTP contacts are provided by G26, G29, K30, T31, S32, N43, D44, H46, T48, and T49. Position 31 (T31) interacts with Mg(2+). A Switch 1 motif is present at residues 41-54; the sequence is KFNDKHITTLQASF. Residues T49 and D72 each contribute to the Mg(2+) site. A Switch 2 motif is present at residues 74 to 92; that stretch reads AGQERFHALGPIYYRDSNG. GTP contacts are provided by G75, N130, K131, D133, A161, and K162. Residues C219 and C220 are each lipidated (S-geranylgeranyl cysteine). Cysteine methyl ester is present on C220. A propeptide spans 221–223 (removed in mature form); sequence SSG.

Belongs to the small GTPase superfamily. Rab family. In terms of assembly, interacts with the cytoplasmic tail of integrins ITGA1, ITGA2, ITGA5, ITGA6, ITGA11 and ITGB1; this interaction is dependent upon its GDP/GTP cycle. Interacts with ANKRD27. Interacts (active GTP-bound form) with TMED10; the interaction is indirect and regulates TMED10 abundance and localization at the Golgi. It depends on Mg(2+) as a cofactor.

It localises to the endoplasmic reticulum membrane. Its subcellular location is the golgi apparatus. The protein resides in the trans-Golgi network. The protein localises to the golgi apparatus membrane. It is found in the early endosome membrane. It localises to the cytoplasmic vesicle membrane. Its subcellular location is the cleavage furrow. The protein resides in the cell projection. The protein localises to the neuron projection. It carries out the reaction GTP + H2O = GDP + phosphate + H(+). Its activity is regulated as follows. Regulated by guanine nucleotide exchange factors (GEFs) including ANKRD27 and RABGEF1, which promote the exchange of bound GDP for free GTP. Regulated by GTPase activating proteins (GAPs) which increase the GTP hydrolysis activity. Inhibited by GDP dissociation inhibitors (GDIs). Its function is as follows. The small GTPases Rab are key regulators of intracellular membrane trafficking, from the formation of transport vesicles to their fusion with membranes. Rabs cycle between an inactive GDP-bound form and an active GTP-bound form that is able to recruit to membranes different sets of downstream effectors directly responsible for vesicle formation, movement, tethering and fusion. RAB21 is involved in membrane trafficking control. Regulates integrin internalization and recycling, but does not influence the traffic of endosomally translocated receptors in general. As a result, may regulate cell adhesion and migration. During the mitosis of adherent cells, controls the endosomal trafficking of integrins which is required for the successful completion of cytokinesis. Involved in neurite growth. Modulates protein levels of the cargo receptors TMED2 and TMED10, and required for appropriate Golgi localization of TMED10. The sequence is that of Ras-related protein Rab-21 (RAB21) from Canis lupus familiaris (Dog).